Reading from the N-terminus, the 1915-residue chain is Cysteine repeat modular protein 2 (1915 aa).

The N-terminal stretch at 1–23 (MKFKKELINILALIFVLKKNIFA) is a signal peptide. FU repeat units follow at residues 53–98 (LGLC…QTYV), 104–151 (SCIC…GYTQ), 161–208 (QLLC…LQYK), 210–263 (NGIC…GYVV), and 267–315 (TQRC…GNYQ). Asn-138 carries N-linked (GlcNAc...) asparagine glycosylation. Residues Asn-274, Asn-279, and Asn-316 are each glycosylated (N-linked (GlcNAc...) asparagine). 5 FU repeats span residues 317 to 362 (SSLC…GFYT), 373 to 422 (QPIC…QTYY), 427 to 492 (TRSC…GFYQ), 496 to 546 (NNSC…SQNN), and 554 to 602 (TQAC…GTYM). An N-linked (GlcNAc...) asparagine glycan is attached at Asn-409. Asn-496, Asn-572, Asn-603, and Asn-621 each carry an N-linked (GlcNAc...) asparagine glycan. FU repeat units lie at residues 606-639 (TNQC…LQQN), 640-686 (YNVC…GFYV), and 690-739 (QQAC…NECL). Residue Asn-742 is glycosylated (N-linked (GlcNAc...) asparagine). FU repeat units lie at residues 760 to 814 (DGQC…GFYY) and 818 to 865 (NKQC…GYYQ). Asn-909, Asn-930, Asn-1051, Asn-1085, and Asn-1193 each carry an N-linked (GlcNAc...) asparagine glycan. An EGF-like domain is found at 1184–1224 (VQIPCDSNINCSGNGKCLWSQDNYNEILCICNINYAGRYCE). Disulfide bonds link Cys-1188-Cys-1200, Cys-1194-Cys-1212, and Cys-1214-Cys-1223. N-linked (GlcNAc...) asparagine glycans are attached at residues Asn-1250, Asn-1297, Asn-1519, Asn-1546, Asn-1554, Asn-1580, and Asn-1596. Transmembrane regions (helical) follow at residues 1599 to 1619 (LLYA…ISII), 1662 to 1682 (YAQL…VYSL), 1704 to 1724 (STSV…VNLF), 1763 to 1783 (GLVF…ILSF), and 1796 to 1816 (FASF…FCFI). N-linked (GlcNAc...) asparagine glycosylation is present at Asn-1867.

The protein resides in the membrane. Functionally, required for mucocyst secretion. This chain is Cysteine repeat modular protein 2, found in Tetrahymena thermophila (strain SB210).